Reading from the N-terminus, the 493-residue chain is Cytochrome P450 Tp9025 (493 aa).

Residues 1–21 form a helical; Signal-anchor for type II membrane protein membrane-spanning segment; the sequence is MALYIIFLLIASSFILFSFIF. N-linked (GlcNAc...) asparagine glycans are attached at residues Asn209 and Asn411. Cys433 lines the heme pocket.

This sequence belongs to the cytochrome P450 family. It depends on heme as a cofactor.

The protein resides in the membrane. It participates in secondary metabolite biosynthesis; terpenoid biosynthesis. Functionally, probably involved in the biosynthesis of germacrene-derived sesquiterpene lactones. This is Cytochrome P450 Tp9025 from Tanacetum parthenium (Feverfew).